The primary structure comprises 167 residues: Ubiquitin-fold modifier-conjugating enzyme 1 (167 aa).

Cysteine 116 serves as the catalytic Glycyl thioester intermediate.

The protein belongs to the ubiquitin-conjugating enzyme family. UFC1 subfamily. Interacts with UBA5 (via C-terminus). Interacts with UFL1. Interacts with UFM1.

Its function is as follows. E2-like enzyme which specifically catalyzes the second step in ufmylation. Accepts the ubiquitin-like modifier UFM1 from the E1 enzyme UBA5 and forms an intermediate with UFM1 via a thioester linkage. Ufmylation is involved in various processes, such as ribosome recycling, response to DNA damage, interferon response or reticulophagy (also called ER-phagy). The polypeptide is Ubiquitin-fold modifier-conjugating enzyme 1 (Esox lucius (Northern pike)).